The chain runs to 751 residues: Catalase-peroxidase 2 (751 aa).

The N-terminal stretch at 1–27 (MFKKTVPLLSAVAIAISFSAGTGVANA) is a signal peptide. Residues 115 to 238 (WHGAGTYRVQ…LAAVQMGLIY (124 aa)) constitute a cross-link (tryptophyl-tyrosyl-methioninium (Trp-Tyr) (with M-264)). The active-site Proton acceptor is the histidine 116. A cross-link (tryptophyl-tyrosyl-methioninium (Tyr-Met) (with W-115)) is located at residues 238 to 264 (YVNPEGPNGKPDPLLAAKDIRDTFGRM). Histidine 279 contacts heme b.

Belongs to the peroxidase family. Peroxidase/catalase subfamily. Homodimer or homotetramer. Requires heme b as cofactor. Formation of the three residue Trp-Tyr-Met cross-link is important for the catalase, but not the peroxidase activity of the enzyme.

It carries out the reaction H2O2 + AH2 = A + 2 H2O. It catalyses the reaction 2 H2O2 = O2 + 2 H2O. Bifunctional enzyme with both catalase and broad-spectrum peroxidase activity. This chain is Catalase-peroxidase 2, found in Idiomarina loihiensis (strain ATCC BAA-735 / DSM 15497 / L2-TR).